A 90-amino-acid polypeptide reads, in one-letter code: Small ribosomal subunit protein uS15 (90 aa).

This sequence belongs to the universal ribosomal protein uS15 family. Part of the 30S ribosomal subunit. Forms a bridge to the 50S subunit in the 70S ribosome, contacting the 23S rRNA.

Functionally, one of the primary rRNA binding proteins, it binds directly to 16S rRNA where it helps nucleate assembly of the platform of the 30S subunit by binding and bridging several RNA helices of the 16S rRNA. In terms of biological role, forms an intersubunit bridge (bridge B4) with the 23S rRNA of the 50S subunit in the ribosome. The protein is Small ribosomal subunit protein uS15 of Wolbachia pipientis wMel.